The sequence spans 481 residues: MNTVSDLSKFVATRCAIADISLADFGRKEIAIAETEMPGLIAIRDEFAAQQPLRGTRITGSLHMTIQTAVLIETLEALGAEVQWASCNIFSTQDHAAAAIAANGTPVFAIKGETLEQYWDFTHRIFEWADGGYTNMILDDGGDATLLLHLGARAEKDQACLNHPTSEEETILFAAIKNKLAQDPTWYSTRLEKVKGVTEETTTGVHRLYQMFARGDLKFPAINVNDSVTKSKFDNLYGCRESLVDAIKRATDVMVAGKVAVVCGYGDVGKGSAQALRALSAQVWVTEVDPICALQAAMEGYRVVTMDYAADKADIFVSATGNYHVITHDHMAKMKDQAIVCNIGHFDNEIDVAGIEKYKWEEIKPQVDHVIFPAANGMPEKRIIILAKGRLVNLGCGTGHPSYVMSSSFANQVIAQIELWNAVGTNKYPVGVYTLPKHLDEKVARLQLKKLNAQLTELTDQQAAYIGVTKEGPYKADHYRY.

Positions 65, 140, and 200 each coordinate substrate. 201-203 (TTT) is an NAD(+) binding site. Substrate-binding residues include Lys230 and Asp234. NAD(+) is bound by residues Asn235, 264–269 (GYGDVG), Glu287, Asn322, 343–345 (IGH), and Asn393.

The protein belongs to the adenosylhomocysteinase family. It depends on NAD(+) as a cofactor.

Its subcellular location is the cytoplasm. The catalysed reaction is S-adenosyl-L-homocysteine + H2O = L-homocysteine + adenosine. It participates in amino-acid biosynthesis; L-homocysteine biosynthesis; L-homocysteine from S-adenosyl-L-homocysteine: step 1/1. Functionally, may play a key role in the regulation of the intracellular concentration of adenosylhomocysteine. The polypeptide is Adenosylhomocysteinase (Polynucleobacter necessarius subsp. necessarius (strain STIR1)).